A 349-amino-acid chain; its full sequence is NAC domain-containing protein JA2 (349 aa).

In terms of domain architecture, NAC spans 14–163; sequence LPPGFRFYPT…EWVLCRIYKK (150 aa). A DNA-binding region spans residues 111 to 169; it reads VGIKKALVFYVGKAPKGSKTNWIMHEYRLFESSRKNNGSSKLDEWVLCRIYKKNSSGPK. A disordered region spans residues 169-194; the sequence is KPLMSGLHSSNEYSHGSSTSSSSQFD. Low complexity predominate over residues 177–191; that stretch reads SSNEYSHGSSTSSSS.

As to expression, expressed in guard cells of the epidermis.

Its subcellular location is the nucleus. Functionally, transcription factor involved in abscisic acid-mediated stomatal closure. Regulates the expression of NCED1, a gene involved in the biosynthesis of abscisic acid (ABA). Required for the stomatal closure induced by the bacterial pathogen Pseudomonas syringae pv tomato DC3000, but not for stomatal reopening. This Solanum lycopersicum (Tomato) protein is NAC domain-containing protein JA2.